Here is a 254-residue protein sequence, read N- to C-terminus: Ornithine decarboxylase antizyme (254 aa).

It belongs to the ODC antizyme family. In terms of assembly, interacts with ODC1 and thereby sterically blocks ODC homodimerization.

Functionally, ornithine decarboxylase (ODC) antizyme protein that negatively regulates ODC activity and intracellular polyamine biosynthesis and uptake in response to increased intracellular polyamine levels. Binds to ODC monomers, inhibiting the assembly of the functional ODC homodimer, and targets the monomers for ubiquitin-independent proteolytic destruction by the 26S proteasome. Required for cellular differentiation in neuronal and myogenic lineages during embryonic development. This is Ornithine decarboxylase antizyme (Oda) from Drosophila melanogaster (Fruit fly).